The primary structure comprises 65 residues: Beta-toxin Tf4a (65 aa).

Residues 2 to 63 (KEGYPADSKG…VWDSATNKCG (62 aa)) enclose the LCN-type CS-alpha/beta domain. 4 disulfide bridges follow: cysteine 12/cysteine 62, cysteine 16/cysteine 38, cysteine 24/cysteine 43, and cysteine 28/cysteine 45. Cysteine amide is present on cysteine 62.

It belongs to the long (4 C-C) scorpion toxin superfamily. Sodium channel inhibitor family. Alpha subfamily. As to expression, expressed by the venom gland.

The protein localises to the secreted. Alpha toxins bind voltage-independently at site-3 of sodium channels (Nav) and inhibit the inactivation of the activated channels, thereby blocking neuronal transmission. This toxin is toxic to frogs but non-toxic to insect larvae (T.molitor), mammals (rats) and crustaceans (crabs) at the doses assayed. This chain is Beta-toxin Tf4a, found in Tityus fasciolatus (Central Brazilian scorpion).